A 422-amino-acid chain; its full sequence is MRVTGLERKILVIVGDGMADRAVPELDGKTPLQAADTPNMDRLAREGSVGLLDPIRPGVRPGSDTAHLTLLGYDPFEVYPGRGPLEALGAGVEVRPGDVAFRCNFATAEERNGELVVVDRRAGRINEDEGTPKLAETINEEVDLPVEFEFKEAVGHRAVLVLRGGDLSADVTDADPKRVGKPVKDVKPTSDDPAAARTAEIVNEFVRKAYEVLKDHPVNRERERQGKPPANVILPRGAGQLEEVEPFSDRYGMSGAVVAGASLIKGIGRMLGMDVPEDEAITGRKDTDLKRKAELALEALDDHDLVLVNFNAVDEAGHDGDARGKVEMIERMDRELVGTLLEGIDPEETVVCLTADHSTPVAVGDHTADPVPVAIWTADARRDPVEEYDEISAARGCLGRFSGLHLLNVLRDLADRIEKFGA.

Residues 173–194 (DADPKRVGKPVKDVKPTSDDPA) form a disordered region. Basic and acidic residues predominate over residues 174–190 (ADPKRVGKPVKDVKPTS).

Belongs to the BPG-independent phosphoglycerate mutase family. A-PGAM subfamily.

The catalysed reaction is (2R)-2-phosphoglycerate = (2R)-3-phosphoglycerate. Its pathway is carbohydrate degradation; glycolysis; pyruvate from D-glyceraldehyde 3-phosphate: step 3/5. In terms of biological role, catalyzes the interconversion of 2-phosphoglycerate and 3-phosphoglycerate. In Methanopyrus kandleri (strain AV19 / DSM 6324 / JCM 9639 / NBRC 100938), this protein is 2,3-bisphosphoglycerate-independent phosphoglycerate mutase.